Here is a 362-residue protein sequence, read N- to C-terminus: Protein-glutamate methylesterase/protein-glutamine glutaminase 5 (362 aa).

The region spanning 13 to 130 (RVLVVDDSAL…RRFLEESRVR (118 aa)) is the Response regulatory domain. At D64 the chain carries 4-aspartylphosphate. Positions 172–362 (LQTTERVVVV…IPPELLRLCR (191 aa)) constitute a CheB-type methylesterase domain. Active-site residues include S184, H210, and D306.

This sequence belongs to the CheB family. Phosphorylated by CheA. Phosphorylation of the N-terminal regulatory domain activates the methylesterase activity.

Its subcellular location is the cytoplasm. It catalyses the reaction [protein]-L-glutamate 5-O-methyl ester + H2O = L-glutamyl-[protein] + methanol + H(+). It carries out the reaction L-glutaminyl-[protein] + H2O = L-glutamyl-[protein] + NH4(+). Involved in chemotaxis. Part of a chemotaxis signal transduction system that modulates chemotaxis in response to various stimuli. Catalyzes the demethylation of specific methylglutamate residues introduced into the chemoreceptors (methyl-accepting chemotaxis proteins or MCP) by CheR. Also mediates the irreversible deamidation of specific glutamine residues to glutamic acid. The chain is Protein-glutamate methylesterase/protein-glutamine glutaminase 5 from Anaeromyxobacter dehalogenans (strain 2CP-C).